The following is a 648-amino-acid chain: Probable alpha-galactosidase D (648 aa).

A signal peptide spans 1-16 (MEFIVSLLLLSPALVA). N-linked (GlcNAc...) asparagine glycosylation is found at N84 and N90. A disulfide bridge connects residues C123 and C156. Residue D154 is the Nucleophile of the active site. 199-203 (EWGID) serves as a coordination point for substrate. Catalysis depends on D221, which acts as the Proton donor. 4 N-linked (GlcNAc...) asparagine glycosylation sites follow: N339, N350, N505, and N572.

It belongs to the glycosyl hydrolase 27 family.

It localises to the secreted. It catalyses the reaction Hydrolysis of terminal, non-reducing alpha-D-galactose residues in alpha-D-galactosides, including galactose oligosaccharides, galactomannans and galactolipids.. Functionally, hydrolyzes a variety of simple alpha-D-galactoside as well as more complex molecules such as oligosaccharides and polysaccharides. The protein is Probable alpha-galactosidase D (aglD) of Aspergillus fumigatus (strain CBS 144.89 / FGSC A1163 / CEA10) (Neosartorya fumigata).